A 381-amino-acid polypeptide reads, in one-letter code: Meiotic recombination protein SPO11-1 (381 aa).

The 140-residue stretch at 23-162 (EEAATLLHRI…LNVVPVAKGL (140 aa)) folds into the Topo IIA-type catalytic domain. Y123 (O-(5'-phospho-DNA)-tyrosine intermediate) is an active-site residue. Residues E209 and D261 each contribute to the Mg(2+) site.

Belongs to the TOP6A family. Requires Mg(2+) as cofactor. As to expression, highly expressed in flowers before pollination. Expressed in roots and shoots.

It localises to the nucleus. The catalysed reaction is ATP-dependent breakage, passage and rejoining of double-stranded DNA.. In terms of biological role, required for meiotic recombination. Mediates DNA cleavage that forms the double-strand breaks (DSB) that initiate meiotic recombination. May be involved in plant growth and development, and stress tolerance. The polypeptide is Meiotic recombination protein SPO11-1 (SPO11-1) (Oryza sativa subsp. indica (Rice)).